Here is a 312-residue protein sequence, read N- to C-terminus: tRNA dimethylallyltransferase (312 aa).

13 to 20 contacts ATP; it reads GPTAVGKT. Substrate is bound at residue 15-20; the sequence is TAVGKT. 2 interaction with substrate tRNA regions span residues 38–41 and 163–167; these read DSVQ and QRVVR.

The protein belongs to the IPP transferase family. Monomer. Mg(2+) serves as cofactor.

It carries out the reaction adenosine(37) in tRNA + dimethylallyl diphosphate = N(6)-dimethylallyladenosine(37) in tRNA + diphosphate. Functionally, catalyzes the transfer of a dimethylallyl group onto the adenine at position 37 in tRNAs that read codons beginning with uridine, leading to the formation of N6-(dimethylallyl)adenosine (i(6)A). The polypeptide is tRNA dimethylallyltransferase (Exiguobacterium sibiricum (strain DSM 17290 / CCUG 55495 / CIP 109462 / JCM 13490 / 255-15)).